A 356-amino-acid polypeptide reads, in one-letter code: Uroporphyrinogen decarboxylase (356 aa).

Substrate is bound by residues 27–31 (RQAGR), Asp77, Tyr154, Ser209, and His327.

Belongs to the uroporphyrinogen decarboxylase family. As to quaternary structure, homodimer.

It localises to the cytoplasm. The catalysed reaction is uroporphyrinogen III + 4 H(+) = coproporphyrinogen III + 4 CO2. It functions in the pathway porphyrin-containing compound metabolism; protoporphyrin-IX biosynthesis; coproporphyrinogen-III from 5-aminolevulinate: step 4/4. Functionally, catalyzes the decarboxylation of four acetate groups of uroporphyrinogen-III to yield coproporphyrinogen-III. The sequence is that of Uroporphyrinogen decarboxylase from Aromatoleum aromaticum (strain DSM 19018 / LMG 30748 / EbN1) (Azoarcus sp. (strain EbN1)).